A 265-amino-acid polypeptide reads, in one-letter code: ATP synthase subunit a (265 aa).

The next 5 helical transmembrane spans lie at 25-45 (FWAV…LFLW), 88-108 (IAPL…MDLI), 142-162 (DLNT…IYSI), 207-227 (LFGN…IGFW), and 233-253 (FAWA…FMML).

It belongs to the ATPase A chain family. As to quaternary structure, F-type ATPases have 2 components, CF(1) - the catalytic core - and CF(0) - the membrane proton channel. CF(1) has five subunits: alpha(3), beta(3), gamma(1), delta(1), epsilon(1). CF(0) has three main subunits: a(1), b(2) and c(9-12). The alpha and beta chains form an alternating ring which encloses part of the gamma chain. CF(1) is attached to CF(0) by a central stalk formed by the gamma and epsilon chains, while a peripheral stalk is formed by the delta and b chains.

The protein resides in the cell inner membrane. Functionally, key component of the proton channel; it plays a direct role in the translocation of protons across the membrane. This chain is ATP synthase subunit a, found in Idiomarina loihiensis (strain ATCC BAA-735 / DSM 15497 / L2-TR).